Consider the following 443-residue polypeptide: MSQFSRRKFLLTAGGTAAAALWLNACGSNNSSTDTTGSTSTPAPSGTSGGDAPEVKGVTLGFIALTDAAPVIIALEKGLFAKYGLPDTKVVKQTSWAVTRDNLELGSDRGGIDGAHILSPMPYLLTAGTITKSQKPLPMYILARLNTQGQGISLSNEFLAEKVQIKDPKLKAIADQKKASGKLLKAAVTFPGGTHDLWMRYWLAANGIDPNNDADLVVIPPPQMVANMQTGTMDTFCVGEPWNARLVNKKLGYTAAVTGELWKFHPEKALTIRADWADKNPKATMALLKAVQEAQIWCEDPANLDELCQITAQDKYFKTSVEDIKPRLQGDIDYGDGRSVKNSDLRMRFWSENASFPYKSHDLWFLTEDIRWGYLPASTDTKALIEKVNRSDLWREAAKAIGREQDIPASDSRGVETFFDGVTFDPENPQAYLDGLKFKAIKA.

An N-terminal signal peptide occupies residues 1–25; it reads MSQFSRRKFLLTAGGTAAAALWLNA. A lipid anchor (N-palmitoyl cysteine) is attached at Cys-26. A lipid anchor (S-diacylglycerol cysteine) is attached at Cys-26. Residues 31–46 are compositionally biased toward low complexity; it reads SSTDTTGSTSTPAPSG. Residues 31-52 form a disordered region; it reads SSTDTTGSTSTPAPSGTSGGDA. Nitrate contacts are provided by Trp-96, Gln-150, His-195, Gly-239, and Lys-268.

Belongs to the CmpA/NrtA family. As to quaternary structure, the complex is composed of two ATP-binding proteins (NrtC and NrtD), two transmembrane proteins (NrtB) and a solute-binding protein (NrtA). NrtA can form homotrimers. In terms of processing, the N-terminus is blocked.

It is found in the cell inner membrane. Functionally, part of the ABC transporter complex NrtABCD involved in nitrate uptake. The complex is probably also involved in nitrite transport. NrtA is the substrate-binding protein. Binds both nitrate and nitrite with high affinity. This is Nitrate/nitrite binding protein NrtA from Synechococcus elongatus (strain ATCC 33912 / PCC 7942 / FACHB-805) (Anacystis nidulans R2).